The chain runs to 261 residues: Cytochrome c oxidase subunit 3 (261 aa).

Residues 1-15 (MTHQTHAYHMVNPSP) lie on the Mitochondrial matrix side of the membrane. The chain crosses the membrane as a helical span at residues 16–34 (WPLTGALSALLMTSGLAMW). Residues 35–40 (FHFNST) lie on the Mitochondrial intermembrane side of the membrane. Residues 41–66 (LLLAMGLLTNILTMYQWWRDIIREST) form a helical membrane-spanning segment. Over 67 to 72 (FQGHHT) the chain is Mitochondrial matrix. The helical transmembrane segment at 73 to 105 (SIVQKGLRYGMILFIISEVFFFSGFFWAFYHSS) threads the bilayer. Topologically, residues 106–128 (LAPTPELGGCWPPTGIHPLNPLE) are mitochondrial intermembrane. Residues 129 to 152 (VPLLNTSVLLASGVSITWAHHSLM) form a helical membrane-spanning segment. The Mitochondrial matrix portion of the chain corresponds to 153-155 (EGN). Residues 156–183 (RKNMLQGLFITISLGVYFTLLQASEYYE) form a helical membrane-spanning segment. The Mitochondrial intermembrane segment spans residues 184–190 (ASFTISD). A helical transmembrane segment spans residues 191 to 223 (GVYGSTFFVATGFHGLHVIIGSTFLIVCFLRQL). At 224-232 (KFHFTSSHH) the chain is on the mitochondrial matrix side. A helical transmembrane segment spans residues 233 to 256 (FGFEAAAWYWHFVDVVWLFLYVSI). The Mitochondrial intermembrane portion of the chain corresponds to 257-261 (YWWGS).

This sequence belongs to the cytochrome c oxidase subunit 3 family. As to quaternary structure, component of the cytochrome c oxidase (complex IV, CIV), a multisubunit enzyme composed of 14 subunits. The complex is composed of a catalytic core of 3 subunits MT-CO1, MT-CO2 and MT-CO3, encoded in the mitochondrial DNA, and 11 supernumerary subunits COX4I, COX5A, COX5B, COX6A, COX6B, COX6C, COX7A, COX7B, COX7C, COX8 and NDUFA4, which are encoded in the nuclear genome. The complex exists as a monomer or a dimer and forms supercomplexes (SCs) in the inner mitochondrial membrane with NADH-ubiquinone oxidoreductase (complex I, CI) and ubiquinol-cytochrome c oxidoreductase (cytochrome b-c1 complex, complex III, CIII), resulting in different assemblies (supercomplex SCI(1)III(2)IV(1) and megacomplex MCI(2)III(2)IV(2)).

It is found in the mitochondrion inner membrane. It carries out the reaction 4 Fe(II)-[cytochrome c] + O2 + 8 H(+)(in) = 4 Fe(III)-[cytochrome c] + 2 H2O + 4 H(+)(out). In terms of biological role, component of the cytochrome c oxidase, the last enzyme in the mitochondrial electron transport chain which drives oxidative phosphorylation. The respiratory chain contains 3 multisubunit complexes succinate dehydrogenase (complex II, CII), ubiquinol-cytochrome c oxidoreductase (cytochrome b-c1 complex, complex III, CIII) and cytochrome c oxidase (complex IV, CIV), that cooperate to transfer electrons derived from NADH and succinate to molecular oxygen, creating an electrochemical gradient over the inner membrane that drives transmembrane transport and the ATP synthase. Cytochrome c oxidase is the component of the respiratory chain that catalyzes the reduction of oxygen to water. Electrons originating from reduced cytochrome c in the intermembrane space (IMS) are transferred via the dinuclear copper A center (CU(A)) of subunit 2 and heme A of subunit 1 to the active site in subunit 1, a binuclear center (BNC) formed by heme A3 and copper B (CU(B)). The BNC reduces molecular oxygen to 2 water molecules using 4 electrons from cytochrome c in the IMS and 4 protons from the mitochondrial matrix. In Equus caballus (Horse), this protein is Cytochrome c oxidase subunit 3 (MT-CO3).